The sequence spans 264 residues: Protein GrpE (264 aa).

A compositionally biased stretch (basic and acidic residues) spans 36–49 (KVQSKKVSSDHSSS). Residues 36 to 59 (KVQSKKVSSDHSSSEDNASSDINS) are disordered. Positions 50–59 (EDNASSDINS) are enriched in low complexity.

The protein belongs to the GrpE family. Homodimer.

It is found in the cytoplasm. In terms of biological role, participates actively in the response to hyperosmotic and heat shock by preventing the aggregation of stress-denatured proteins, in association with DnaK and GrpE. It is the nucleotide exchange factor for DnaK and may function as a thermosensor. Unfolded proteins bind initially to DnaJ; upon interaction with the DnaJ-bound protein, DnaK hydrolyzes its bound ATP, resulting in the formation of a stable complex. GrpE releases ADP from DnaK; ATP binding to DnaK triggers the release of the substrate protein, thus completing the reaction cycle. Several rounds of ATP-dependent interactions between DnaJ, DnaK and GrpE are required for fully efficient folding. This is Protein GrpE from Peanut witches'-broom phytoplasma.